Reading from the N-terminus, the 238-residue chain is Probable transcriptional regulatory protein SMU_1789c (238 aa).

This sequence belongs to the TACO1 family. YeeN subfamily.

It localises to the cytoplasm. This chain is Probable transcriptional regulatory protein SMU_1789c, found in Streptococcus mutans serotype c (strain ATCC 700610 / UA159).